The sequence spans 946 residues: MKPLSSPLQQHWQTVVERLPEILAEATLSVQAKSVLTFSDFVQDSVIAHPEWLTELESAPPQADEWRHYAAWLQDALAQVTDEAALMRELRVFRRRIMVRIAWAQALSLVEEENILQQLSHLAETLIVAARDWLYDACCREWGTPCNHDGVPQPLLILGMGKLGGGELNFSSDIDLIFAWPEHGSTRGGRRELDNAQFFTRMGQRLIKVLDQPTMDGFVYRVDMRLRPFGDSGPLVLSFAALEDYYQEQGRDWERYAMVKARIMGAADSAYVDELRAMLRPFVFRRYIDFSVIQSLRNMKGMIAREVRRRGLKDNIKLGAGGIREIEFIVQVFQLIRGGREPSLQSRSLLPTLSAIDALHLLPENDAGQLRAAYLFLRRLENLLQSINDEQTQTLPGDELNRARLAWGMRTDDWSQLTDILAAHMANVRRVFNELIGDDETDTQEDTLSEHWRELWQDALQEDDTTPVLAHLSDDDRGRVLALIADFRKELDKRTIGPRGRQVLDHLMPHLLSDVCSREDASVPLSRITPLLVGIVTRTTYLELLSEFPGALKHLISLCAASPMVASQLARYPLLLDELLDPNTLYQPTATDAYRDELRQYLLRVPEDDEEQQLEALRQFKQTQLLRIAAADIAGTLPVMKVSDHLTWLAEAIIDAVVQQAWGQMVARYGQPTHLAERTGRGFAVVGYGKLGGWELGYSSDLDLIFLHDCPMDVMTDGEREIDGRQFYLRLAQRIMHLFSTRTSSGILYEVDARLRPSGAAGMLVTSAEAFADYQKNEAWTWEHQALVRARVVYGDPQLTSQFDAVRRDIMTLAREGKTLQTEVREMREKMRAHLGNKHRDRFDIKADEGGITDIEFITQYLVLRYAHEKPKLTRWSDNVRILELLAQNDIMDEQEAHALTLAYTTLRDELHHLALQELPGHVAQECFSKERALVRASWQKWLVAG.

Positions Met-1 to Glu-440 are adenylyl removase. Residues Ser-449–Gly-946 are adenylyl transferase.

The protein belongs to the GlnE family. Mg(2+) is required as a cofactor.

It catalyses the reaction [glutamine synthetase]-O(4)-(5'-adenylyl)-L-tyrosine + phosphate = [glutamine synthetase]-L-tyrosine + ADP. It carries out the reaction [glutamine synthetase]-L-tyrosine + ATP = [glutamine synthetase]-O(4)-(5'-adenylyl)-L-tyrosine + diphosphate. Involved in the regulation of glutamine synthetase GlnA, a key enzyme in the process to assimilate ammonia. When cellular nitrogen levels are high, the C-terminal adenylyl transferase (AT) inactivates GlnA by covalent transfer of an adenylyl group from ATP to specific tyrosine residue of GlnA, thus reducing its activity. Conversely, when nitrogen levels are low, the N-terminal adenylyl removase (AR) activates GlnA by removing the adenylyl group by phosphorolysis, increasing its activity. The regulatory region of GlnE binds the signal transduction protein PII (GlnB) which indicates the nitrogen status of the cell. The protein is Bifunctional glutamine synthetase adenylyltransferase/adenylyl-removing enzyme of Citrobacter koseri (strain ATCC BAA-895 / CDC 4225-83 / SGSC4696).